The sequence spans 124 residues: Max-like protein 1 (124 aa).

The segment covering 1-10 (MSDMSDLEDD) has biased composition (acidic residues). A disordered region spans residues 1 to 44 (MSDMSDLEDDQTGHCGSGEHSGPFDPKRHAREQHNALERRRRDN). The segment at 29-42 (HAREQHNALERRRR) is basic motif. Residues 29–82 (HAREQHNALERRRRDNIKDMYTSLREVVPDANGERVQASRAVILKKAIESIEKG) enclose the bHLH domain. Residues 32–44 (EQHNALERRRRDN) are compositionally biased toward basic and acidic residues. The tract at residues 43 to 82 (DNIKDMYTSLREVVPDANGERVQASRAVILKKAIESIEKG) is helix-loop-helix motif. Residues 86–113 (SATLSVDVAEQESKNAKLREEIARLKAK) are a coiled coil.

Belongs to the MAX family. Heterodimer with mdl-1 in presence and absence of DNA. Interacts with tdpt-1; the interaction promotes axon regeneration after injury. As to expression, expressed in D-type motor neurons.

The protein localises to the nucleus. Transcriptional regulator which binds to the E box motif 5'-CACGTG-3', when in a heterodimeric complex with mdl-1. Involved in the control of lifespan in response to dietary restriction, the decline in protein homeostasis associated with normal aging and may overlap with the insulin-like signaling pathway. Involved in promoting infection by the microsporidian pathogen N.parisii. Required for the expression of svh-2 and the promotion of axon regeneration after injury. This chain is Max-like protein 1, found in Caenorhabditis elegans.